The following is a 90-amino-acid chain: MAVKIRLKRMGSKRNPFYRIVVADSRSPRDGRSIEQIGTYNPVVNPVEVKIDEEKALDWMSKGAKPSDTVRNLFSNEGIMKKFHEQKNSK.

Belongs to the bacterial ribosomal protein bS16 family.

The polypeptide is Small ribosomal subunit protein bS16 (Oceanobacillus iheyensis (strain DSM 14371 / CIP 107618 / JCM 11309 / KCTC 3954 / HTE831)).